A 403-amino-acid chain; its full sequence is Imidazolonepropionase (403 aa).

2 residues coordinate Fe(3+): His69 and His71. Residues His69 and His71 each coordinate Zn(2+). The 4-imidazolone-5-propanoate site is built by Arg78, Tyr141, and His174. Residue Tyr141 participates in N-formimidoyl-L-glutamate binding. Fe(3+) is bound at residue His239. His239 is a Zn(2+) binding site. Gln242 provides a ligand contact to 4-imidazolone-5-propanoate. Asp314 contacts Fe(3+). Asp314 lines the Zn(2+) pocket. N-formimidoyl-L-glutamate-binding residues include Asn316 and Gly318. Ser319 lines the 4-imidazolone-5-propanoate pocket.

The protein belongs to the metallo-dependent hydrolases superfamily. HutI family. Requires Zn(2+) as cofactor. Fe(3+) is required as a cofactor.

It localises to the cytoplasm. The catalysed reaction is 4-imidazolone-5-propanoate + H2O = N-formimidoyl-L-glutamate. It participates in amino-acid degradation; L-histidine degradation into L-glutamate; N-formimidoyl-L-glutamate from L-histidine: step 3/3. In terms of biological role, catalyzes the hydrolytic cleavage of the carbon-nitrogen bond in imidazolone-5-propanoate to yield N-formimidoyl-L-glutamate. It is the third step in the universal histidine degradation pathway. In Legionella pneumophila (strain Lens), this protein is Imidazolonepropionase.